We begin with the raw amino-acid sequence, 263 residues long: Phosphatidylglycerol--prolipoprotein diacylglyceryl transferase (263 aa).

4 helical membrane passes run 10–30 (VAITLGPLQFRWYGLMYLFGF), 56–76 (MVTYVILGVVLGGRIGYILFY), 91–111 (IWNGGMSFHGGLLGVVFAMWL), and 117–137 (GLGFMDVSDFVAPLIPPGLFF). Arginine 139 is an a 1,2-diacyl-sn-glycero-3-phospho-(1'-sn-glycerol) binding site. Helical transmembrane passes span 171 to 191 (PSQLYECALEGVILFLALWVF), 199 to 219 (GHVSGLFALLYGVFRFTVEFV), and 231 to 251 (FGWLTMGQVLCLPLIMLGLWL).

Belongs to the Lgt family.

Its subcellular location is the cell inner membrane. It carries out the reaction L-cysteinyl-[prolipoprotein] + a 1,2-diacyl-sn-glycero-3-phospho-(1'-sn-glycerol) = an S-1,2-diacyl-sn-glyceryl-L-cysteinyl-[prolipoprotein] + sn-glycerol 1-phosphate + H(+). It participates in protein modification; lipoprotein biosynthesis (diacylglyceryl transfer). Its function is as follows. Catalyzes the transfer of the diacylglyceryl group from phosphatidylglycerol to the sulfhydryl group of the N-terminal cysteine of a prolipoprotein, the first step in the formation of mature lipoproteins. The protein is Phosphatidylglycerol--prolipoprotein diacylglyceryl transferase of Nitratidesulfovibrio vulgaris (strain ATCC 29579 / DSM 644 / CCUG 34227 / NCIMB 8303 / VKM B-1760 / Hildenborough) (Desulfovibrio vulgaris).